The primary structure comprises 396 residues: 1-deoxy-D-xylulose 5-phosphate reductoisomerase (396 aa).

Threonine 10, glycine 11, serine 12, isoleucine 13, and asparagine 123 together coordinate NADPH. A 1-deoxy-D-xylulose 5-phosphate-binding site is contributed by lysine 124. Glutamate 125 is a binding site for NADPH. Aspartate 149 provides a ligand contact to Mn(2+). The 1-deoxy-D-xylulose 5-phosphate site is built by serine 150, glutamate 151, serine 185, and histidine 208. Glutamate 151 lines the Mn(2+) pocket. Glycine 214 contacts NADPH. The 1-deoxy-D-xylulose 5-phosphate site is built by serine 221, asparagine 226, lysine 227, and glutamate 230. Mn(2+) is bound at residue glutamate 230.

Belongs to the DXR family. Mg(2+) serves as cofactor. Mn(2+) is required as a cofactor.

The enzyme catalyses 2-C-methyl-D-erythritol 4-phosphate + NADP(+) = 1-deoxy-D-xylulose 5-phosphate + NADPH + H(+). The protein operates within isoprenoid biosynthesis; isopentenyl diphosphate biosynthesis via DXP pathway; isopentenyl diphosphate from 1-deoxy-D-xylulose 5-phosphate: step 1/6. Its function is as follows. Catalyzes the NADPH-dependent rearrangement and reduction of 1-deoxy-D-xylulose-5-phosphate (DXP) to 2-C-methyl-D-erythritol 4-phosphate (MEP). This Shewanella baltica (strain OS223) protein is 1-deoxy-D-xylulose 5-phosphate reductoisomerase.